A 506-amino-acid chain; its full sequence is Maturase K (506 aa).

It belongs to the intron maturase 2 family. MatK subfamily.

The protein resides in the plastid. It is found in the chloroplast. Functionally, usually encoded in the trnK tRNA gene intron. Probably assists in splicing its own and other chloroplast group II introns. This Jurinea cyanoides protein is Maturase K.